The sequence spans 165 residues: uncharacterized protein (165 aa).

A helical transmembrane segment spans residues 16–36; sequence ASISSILNFFFFYIMEYFVAV.

Belongs to the asfivirus F165R family.

The protein localises to the host membrane. This is an uncharacterized protein from Ornithodoros (relapsing fever ticks).